Here is a 147-residue protein sequence, read N- to C-terminus: Ribonuclease 4 (147 aa).

An N-terminal signal peptide occupies residues 1–28 (MALQRTHSLLLLLLLTLLGLGLVQPSYG). Residue Gln29 is modified to Pyrrolidone carboxylic acid. Positions 35, 40, 68, 71, and 72 each coordinate dUMP. The Proton acceptor role is filled by His40. 4 disulfides stabilise this stretch: Cys53/Cys109, Cys67/Cys120, Cys85/Cys135, and Cys92/Cys99. His144 serves as the catalytic Proton donor. Phe145 is a dUMP binding site.

The protein belongs to the pancreatic ribonuclease family. As to expression, expressed in the cortical and medullary tubules of the kidney, and in the transitional epithelium of the urinary bladder (at protein level).

Its subcellular location is the secreted. Its function is as follows. Cleaves preferentially after uridine bases. Has antimicrobial activity against uropathogenic E.coli (UPEC). Probably contributes to urinary tract sterility. This chain is Ribonuclease 4 (RNASE4), found in Homo sapiens (Human).